The primary structure comprises 468 residues: 6-phosphogluconate dehydrogenase, decarboxylating (468 aa).

Residues G9–G14, N32–S34, V73–A75, and N101 each bind NADP(+). Substrate-binding positions include N101 and S127–G129. K182 acts as the Proton acceptor in catalysis. Residue H185–N186 participates in substrate binding. E189 (proton donor) is an active-site residue. Substrate contacts are provided by Y190, K259, R286, R444, and H450.

This sequence belongs to the 6-phosphogluconate dehydrogenase family. As to quaternary structure, homodimer.

The enzyme catalyses 6-phospho-D-gluconate + NADP(+) = D-ribulose 5-phosphate + CO2 + NADPH. It participates in carbohydrate degradation; pentose phosphate pathway; D-ribulose 5-phosphate from D-glucose 6-phosphate (oxidative stage): step 3/3. Its function is as follows. Catalyzes the oxidative decarboxylation of 6-phosphogluconate to ribulose 5-phosphate and CO(2), with concomitant reduction of NADP to NADPH. This chain is 6-phosphogluconate dehydrogenase, decarboxylating (gnd), found in Staphylococcus epidermidis (strain ATCC 35984 / DSM 28319 / BCRC 17069 / CCUG 31568 / BM 3577 / RP62A).